The primary structure comprises 1149 residues: DNA-directed RNA polymerase III subunit RPC2 (1149 aa).

Zn(2+) contacts are provided by Cys-1095, Cys-1098, Cys-1107, and Cys-1110. The C4-type zinc-finger motif lies at 1095–1110 (CDKCGLMGYSGWCTTC).

Belongs to the RNA polymerase beta chain family. As to quaternary structure, component of the RNA polymerase III (Pol III) complex consisting of 17 subunits.

The protein resides in the nucleus. It carries out the reaction RNA(n) + a ribonucleoside 5'-triphosphate = RNA(n+1) + diphosphate. DNA-dependent RNA polymerase catalyzes the transcription of DNA into RNA using the four ribonucleoside triphosphates as substrates. Second largest core component of RNA polymerase III which synthesizes small RNAs, such as 5S rRNA and tRNAs. Proposed to contribute to the polymerase catalytic activity and forms the polymerase active center together with the largest subunit. Pol III is composed of mobile elements and RPC2 is part of the core element with the central large cleft and probably a clamp element that moves to open and close the cleft. The sequence is that of DNA-directed RNA polymerase III subunit RPC2 (RET1) from Saccharomyces cerevisiae (strain ATCC 204508 / S288c) (Baker's yeast).